A 196-amino-acid polypeptide reads, in one-letter code: Pyridoxal 5'-phosphate synthase subunit PdxT (196 aa).

Residue 52-54 (GES) coordinates L-glutamine. Residue Cys-84 is the Nucleophile of the active site. Residues Arg-113 and 141–142 (IR) contribute to the L-glutamine site. Active-site charge relay system residues include His-178 and Glu-180.

It belongs to the glutaminase PdxT/SNO family. In terms of assembly, in the presence of PdxS, forms a dodecamer of heterodimers. Only shows activity in the heterodimer.

It carries out the reaction aldehydo-D-ribose 5-phosphate + D-glyceraldehyde 3-phosphate + L-glutamine = pyridoxal 5'-phosphate + L-glutamate + phosphate + 3 H2O + H(+). The catalysed reaction is L-glutamine + H2O = L-glutamate + NH4(+). It functions in the pathway cofactor biosynthesis; pyridoxal 5'-phosphate biosynthesis. Its function is as follows. Catalyzes the hydrolysis of glutamine to glutamate and ammonia as part of the biosynthesis of pyridoxal 5'-phosphate. The resulting ammonia molecule is channeled to the active site of PdxS. The sequence is that of Pyridoxal 5'-phosphate synthase subunit PdxT from Pyrococcus horikoshii (strain ATCC 700860 / DSM 12428 / JCM 9974 / NBRC 100139 / OT-3).